The chain runs to 198 residues: GTP cyclohydrolase-2 (198 aa).

GTP is bound at residue 52-56; it reads RMHSE. 3 residues coordinate Zn(2+): Cys-57, Cys-68, and Cys-70. Residues Gln-73, 94–96, and Thr-116 contribute to the GTP site; that span reads EGR. Asp-128 acts as the Proton acceptor in catalysis. Arg-130 serves as the catalytic Nucleophile. 2 residues coordinate GTP: Thr-151 and Lys-156.

It belongs to the GTP cyclohydrolase II family. Zn(2+) serves as cofactor.

It catalyses the reaction GTP + 4 H2O = 2,5-diamino-6-hydroxy-4-(5-phosphoribosylamino)-pyrimidine + formate + 2 phosphate + 3 H(+). It participates in cofactor biosynthesis; riboflavin biosynthesis; 5-amino-6-(D-ribitylamino)uracil from GTP: step 1/4. Functionally, catalyzes the conversion of GTP to 2,5-diamino-6-ribosylamino-4(3H)-pyrimidinone 5'-phosphate (DARP), formate and pyrophosphate. The polypeptide is GTP cyclohydrolase-2 (Vibrio vulnificus (strain CMCP6)).